A 302-amino-acid chain; its full sequence is 4-hydroxy-tetrahydrodipicolinate synthase (302 aa).

Thr-49 provides a ligand contact to pyruvate. The Proton donor/acceptor role is filled by Tyr-137. Lys-166 (schiff-base intermediate with substrate) is an active-site residue. Ile-208 serves as a coordination point for pyruvate.

Belongs to the DapA family. As to quaternary structure, homotetramer; dimer of dimers.

The protein localises to the cytoplasm. It carries out the reaction L-aspartate 4-semialdehyde + pyruvate = (2S,4S)-4-hydroxy-2,3,4,5-tetrahydrodipicolinate + H2O + H(+). It participates in amino-acid biosynthesis; L-lysine biosynthesis via DAP pathway; (S)-tetrahydrodipicolinate from L-aspartate: step 3/4. In terms of biological role, catalyzes the condensation of (S)-aspartate-beta-semialdehyde [(S)-ASA] and pyruvate to 4-hydroxy-tetrahydrodipicolinate (HTPA). The polypeptide is 4-hydroxy-tetrahydrodipicolinate synthase (Chloroherpeton thalassium (strain ATCC 35110 / GB-78)).